Here is a 401-residue protein sequence, read N- to C-terminus: Argininosuccinate synthase (401 aa).

8 to 16 provides a ligand contact to ATP; it reads AYSGGLDTS. An L-citrulline-binding site is contributed by Y86. G116 contributes to the ATP binding site. Positions 118, 122, and 123 each coordinate L-aspartate. Residue N122 participates in L-citrulline binding. Residues R126, S174, E258, and Y270 each coordinate L-citrulline.

Belongs to the argininosuccinate synthase family. Type 1 subfamily. As to quaternary structure, homotetramer.

The protein localises to the cytoplasm. The enzyme catalyses L-citrulline + L-aspartate + ATP = 2-(N(omega)-L-arginino)succinate + AMP + diphosphate + H(+). The protein operates within amino-acid biosynthesis; L-arginine biosynthesis; L-arginine from L-ornithine and carbamoyl phosphate: step 2/3. The polypeptide is Argininosuccinate synthase (Acidothermus cellulolyticus (strain ATCC 43068 / DSM 8971 / 11B)).